The chain runs to 199 residues: Pyridoxal 5'-phosphate synthase subunit PdxT (199 aa).

52–54 (GES) lines the L-glutamine pocket. C84 acts as the Nucleophile in catalysis. Residues R115 and 143 to 144 (IR) each bind L-glutamine. Residues H179 and E181 each act as charge relay system in the active site.

It belongs to the glutaminase PdxT/SNO family. In terms of assembly, in the presence of PdxS, forms a dodecamer of heterodimers. Only shows activity in the heterodimer.

It carries out the reaction aldehydo-D-ribose 5-phosphate + D-glyceraldehyde 3-phosphate + L-glutamine = pyridoxal 5'-phosphate + L-glutamate + phosphate + 3 H2O + H(+). It catalyses the reaction L-glutamine + H2O = L-glutamate + NH4(+). It functions in the pathway cofactor biosynthesis; pyridoxal 5'-phosphate biosynthesis. Catalyzes the hydrolysis of glutamine to glutamate and ammonia as part of the biosynthesis of pyridoxal 5'-phosphate. The resulting ammonia molecule is channeled to the active site of PdxS. This is Pyridoxal 5'-phosphate synthase subunit PdxT from Methanosarcina mazei (strain ATCC BAA-159 / DSM 3647 / Goe1 / Go1 / JCM 11833 / OCM 88) (Methanosarcina frisia).